A 66-amino-acid polypeptide reads, in one-letter code: Large ribosomal subunit protein bL33c (66 aa).

It belongs to the bacterial ribosomal protein bL33 family.

The protein resides in the plastid. It is found in the chloroplast. The polypeptide is Large ribosomal subunit protein bL33c (Barbarea verna (Land cress)).